Consider the following 354-residue polypeptide: 4-hydroxy-3-methylbut-2-en-1-yl diphosphate synthase (flavodoxin) (354 aa).

The [4Fe-4S] cluster site is built by Cys262, Cys265, Cys297, and Glu304.

Belongs to the IspG family. It depends on [4Fe-4S] cluster as a cofactor.

The catalysed reaction is (2E)-4-hydroxy-3-methylbut-2-enyl diphosphate + oxidized [flavodoxin] + H2O + 2 H(+) = 2-C-methyl-D-erythritol 2,4-cyclic diphosphate + reduced [flavodoxin]. It participates in isoprenoid biosynthesis; isopentenyl diphosphate biosynthesis via DXP pathway; isopentenyl diphosphate from 1-deoxy-D-xylulose 5-phosphate: step 5/6. Functionally, converts 2C-methyl-D-erythritol 2,4-cyclodiphosphate (ME-2,4cPP) into 1-hydroxy-2-methyl-2-(E)-butenyl 4-diphosphate. In Helicobacter hepaticus (strain ATCC 51449 / 3B1), this protein is 4-hydroxy-3-methylbut-2-en-1-yl diphosphate synthase (flavodoxin).